Consider the following 139-residue polypeptide: uncharacterized protein (139 aa).

This is an uncharacterized protein from Invertebrate iridescent virus 6 (IIV-6).